The following is a 300-amino-acid chain: Putative S-adenosyl-L-methionine-dependent methyltransferase MMAR_1058 (300 aa).

S-adenosyl-L-methionine-binding positions include Asp127 and Asp156–Leu157.

The protein belongs to the UPF0677 family.

Its function is as follows. Exhibits S-adenosyl-L-methionine-dependent methyltransferase activity. In Mycobacterium marinum (strain ATCC BAA-535 / M), this protein is Putative S-adenosyl-L-methionine-dependent methyltransferase MMAR_1058.